The following is a 292-amino-acid chain: RNA-binding P34 protein (292 aa).

A helical transmembrane segment spans residues 29-46; sequence CAIYTVACRILFLSVGFM. Residues 219–292 form an RNA-binding region; that stretch reads EGFKSPQVEY…NFKAKNKNNE (74 aa).

It is found in the host endoplasmic reticulum membrane. Functionally, acts as a ssRNA-binding protein that may be involved in targeting RNA2 to replication sites or facilitating RNA2 replication. The chain is RNA-binding P34 protein from Lettuce infectious yellows virus (isolate United States/92) (LIYV).